We begin with the raw amino-acid sequence, 251 residues long: Seminal metalloprotease 1 (251 aa).

Positions 1-18 are cleaved as a signal peptide; that stretch reads MFPQIWGVIFLFTPTVFS. The Peptidase M12A domain maps to 44-248; sequence NGIVNQIYHW…RKLNKMYRCP (205 aa). Asn-55 and Asn-120 each carry an N-linked (GlcNAc...) asparagine glycan. Disulfide bonds link Cys-87/Cys-247 and Cys-111/Cys-136. Position 144 (His-144) interacts with Zn(2+). Glu-145 is a catalytic residue. Zn(2+) contacts are provided by His-148 and His-154. Asn-185 is a glycosylation site (N-linked (GlcNAc...) asparagine).

Requires Zn(2+) as cofactor. Undergoes cleavage in the male during mating with a cleaved product detected in the ejaculatory duct and/or bulb of males by 8-10 minutes after the start of mating. Further cleavage occurs in the mated female. May undergo cleavage in a two-step process where it is first cleaved by Sems, making it susceptible to activational cleavage which may be carried out by another protease or by autocleavage. In terms of tissue distribution, produced in the male accessory glands and secreted into seminal fluid. In mated females, confined to the reproductive tract and also detected in eggs laid by mated females (at protein level).

It is found in the secreted. Functionally, seminal fluid metalloprotease which is transferred to females during mating and is required for processing of two other seminal fluid proteins Acp26Aa and Acp36DE in mated females. The sequence is that of Seminal metalloprotease 1 from Drosophila melanogaster (Fruit fly).